The following is a 73-amino-acid chain: Protein SlyX homolog (73 aa).

Belongs to the SlyX family.

This Haemophilus ducreyi (strain 35000HP / ATCC 700724) protein is Protein SlyX homolog.